The sequence spans 308 residues: Acetaldehyde dehydrogenase 1 (308 aa).

10–13 provides a ligand contact to NAD(+); that stretch reads SGNI. The active-site Acyl-thioester intermediate is the C128. NAD(+) is bound by residues 159–167 and N285; that span reads SAGPGTRAN.

It belongs to the acetaldehyde dehydrogenase family.

It catalyses the reaction acetaldehyde + NAD(+) + CoA = acetyl-CoA + NADH + H(+). The protein is Acetaldehyde dehydrogenase 1 of Salinispora arenicola (strain CNS-205).